A 338-amino-acid polypeptide reads, in one-letter code: MGVNLSSILIKHETSLKDNSGSIVSVDAYNIIYQFLSSIRGDDGEPLKDSNGNITSHLSGIFYRTSNLLENNIKPVYVFDGKPFHLKSETLRERSLIKEKNIMKLEEAIASNDDAKIRSLSSRINYITDDIVNESKTLLNLMGLPYVQAPSEGEAQASYMTLKGDVNAVVSQDYDCLLFGAKRILRNFTVYGRRRIAGTSRTINVNPEIIDLNENLSNLGISREQLIYIGILTGTDFNPGVKGIGAKTALSLIKKYNDIYSVIKIKNIGIDNLDEIIEFFMNPPHNDYEIKFNEPDFDGIIDFLCGKHNFSESRVNETLEKISRNYKKDHQSSLDRFF.

An N-domain region spans residues 1 to 98; the sequence is MGVNLSSILI…ETLRERSLIK (98 aa). The Mg(2+) site is built by D27, D80, E152, E154, D173, D175, and D236. Positions 116–257 are I-domain; it reads KIRSLSSRIN…TALSLIKKYN (142 aa). The interval 330–338 is interaction with PCNA; sequence HQSSLDRFF.

The protein belongs to the XPG/RAD2 endonuclease family. FEN1 subfamily. Interacts with PCNA. PCNA stimulates the nuclease activity without altering cleavage specificity. Mg(2+) is required as a cofactor.

In terms of biological role, structure-specific nuclease with 5'-flap endonuclease and 5'-3' exonuclease activities involved in DNA replication and repair. During DNA replication, cleaves the 5'-overhanging flap structure that is generated by displacement synthesis when DNA polymerase encounters the 5'-end of a downstream Okazaki fragment. Binds the unpaired 3'-DNA end and kinks the DNA to facilitate 5' cleavage specificity. Cleaves one nucleotide into the double-stranded DNA from the junction in flap DNA, leaving a nick for ligation. Also involved in the base excision repair (BER) pathway. Acts as a genome stabilization factor that prevents flaps from equilibrating into structures that lead to duplications and deletions. Also possesses 5'-3' exonuclease activity on nicked or gapped double-stranded DNA. The chain is Flap endonuclease 1 from Picrophilus torridus (strain ATCC 700027 / DSM 9790 / JCM 10055 / NBRC 100828 / KAW 2/3).